The following is a 309-amino-acid chain: Taste receptor type 2 member 46 (309 aa).

Met1 is a topological domain (extracellular). A helical transmembrane segment spans residues Ile2–Phe22. Over Ala23–Gln46 the chain is Cytoplasmic. Residues Ile47–Tyr67 form a helical membrane-spanning segment. Topologically, residues Ala68 to Asn86 are extracellular. A helical transmembrane segment spans residues Val87–Leu107. The Cytoplasmic portion of the chain corresponds to Leu108–Lys126. A helical transmembrane segment spans residues Ser127–Ile147. The Extracellular portion of the chain corresponds to Asn148 to Thr178. A glycan (N-linked (GlcNAc...) asparagine) is linked at Asn161. The chain crosses the membrane as a helical span at residues Val179–Ile199. The Cytoplasmic portion of the chain corresponds to Cys200 to Gln229. A helical transmembrane segment spans residues Thr230–Trp250. The Extracellular portion of the chain corresponds to Ser251–Pro259. Residues Val260–Ile280 form a helical membrane-spanning segment. Residues Trp281–Ser309 are Cytoplasmic-facing.

The protein belongs to the G-protein coupled receptor T2R family.

The protein localises to the membrane. Its subcellular location is the cell projection. It is found in the cilium membrane. In terms of biological role, receptor that may play a role in the perception of bitterness and is gustducin-linked. May play a role in sensing the chemical composition of the gastrointestinal content. The activity of this receptor may stimulate alpha gustducin, mediate PLC-beta-2 activation and lead to the gating of TRPM5. In airway epithelial cells, binding of bitter compounds increases the intracellular calcium ion concentration and stimulates ciliary beat frequency. This is Taste receptor type 2 member 46 (TAS2R46) from Gorilla gorilla gorilla (Western lowland gorilla).